We begin with the raw amino-acid sequence, 222 residues long: Adenylate kinase (222 aa).

S2 is a propeptide (removed in mature form). Residues S2 and S3 each carry the N-acetylserine modification. 16–21 (GAGKGT) is an ATP binding site. Positions 36 to 65 (ATGDMLRSQIAKGTQLGLEAKKIMDQGGLV) are NMP. AMP contacts are provided by residues T37, R42, 63–65 (GLV), 92–95 (GFPR), and Q99. Residues 133 to 170 (GRLIHPASGRSYHKIFNPPKEDMKDDVTGEALVQRSDD) are LID. Residues R134 and 143–144 (SY) contribute to the ATP site. 2 residues coordinate AMP: R167 and R178. Residue Q206 participates in ATP binding.

This sequence belongs to the adenylate kinase family. AK2 subfamily. In terms of assembly, monomer.

Its subcellular location is the cytoplasm. The protein resides in the cytosol. It localises to the mitochondrion intermembrane space. The enzyme catalyses AMP + ATP = 2 ADP. In terms of biological role, catalyzes the reversible transfer of the terminal phosphate group between ATP and AMP. Plays an important role in cellular energy homeostasis and in adenine nucleotide metabolism. Adenylate kinase activity is critical for regulation of the phosphate utilization and the AMP de novo biosynthesis pathways. This chain is Adenylate kinase, found in Saccharomyces cerevisiae (strain RM11-1a) (Baker's yeast).